The sequence spans 227 residues: Protein PhlB (227 aa).

Residues 1–35 (MPEGRRLRRALAIALLALVAVTGLLMMAKEQQMGQ) form the signal peptide. ANK repeat units follow at residues 75 to 104 (RQVT…DPAA), 108 to 137 (DGNS…QMNV), 142 to 171 (TGAT…DTTL), and 175 to 204 (LGDT…MPGR).

In terms of biological role, cell-protective protein that neutralizes the intracellular lysis capacity of phospholipase A1 through a direct interaction with the enzyme. This Serratia liquefaciens protein is Protein PhlB (phlB).